Consider the following 884-residue polypeptide: DNA mismatch repair protein MutS (884 aa).

ATP is bound at residue 643–650; it reads GPNMGGKS.

Belongs to the DNA mismatch repair MutS family.

This protein is involved in the repair of mismatches in DNA. It is possible that it carries out the mismatch recognition step. This protein has a weak ATPase activity. The polypeptide is DNA mismatch repair protein MutS (Methylobacillus flagellatus (strain ATCC 51484 / DSM 6875 / VKM B-1610 / KT)).